Reading from the N-terminus, the 175-residue chain is Catabolic 3-dehydroquinase (175 aa).

The active-site Proton acceptor is the Tyr-26. Residues Asn-104, His-110, and Asp-117 each contribute to the substrate site. The active-site Proton donor is His-130. Substrate contacts are provided by residues 131-132 (VS) and Arg-141.

It belongs to the type-II 3-dehydroquinase family. In terms of assembly, homododecamer. Adopts a ring-like structure, composed of an arrangement of two hexameric rings stacked on top of one another.

It catalyses the reaction 3-dehydroquinate = 3-dehydroshikimate + H2O. Its pathway is aromatic compound metabolism; 3,4-dihydroxybenzoate biosynthesis; 3,4-dihydroxybenzoate from 3-dehydroquinate: step 1/2. Its function is as follows. Is involved in the catabolism of quinate. Allows the utilization of quinate as carbon source via the beta-ketoadipate pathway. This is Catabolic 3-dehydroquinase from Sordaria macrospora (strain ATCC MYA-333 / DSM 997 / K(L3346) / K-hell).